The following is a 389-amino-acid chain: Lipid-A-disaccharide synthase (389 aa).

The protein belongs to the LpxB family.

It catalyses the reaction a lipid X + a UDP-2-N,3-O-bis[(3R)-3-hydroxyacyl]-alpha-D-glucosamine = a lipid A disaccharide + UDP + H(+). The protein operates within bacterial outer membrane biogenesis; LPS lipid A biosynthesis. Condensation of UDP-2,3-diacylglucosamine and 2,3-diacylglucosamine-1-phosphate to form lipid A disaccharide, a precursor of lipid A, a phosphorylated glycolipid that anchors the lipopolysaccharide to the outer membrane of the cell. The protein is Lipid-A-disaccharide synthase of Albidiferax ferrireducens (strain ATCC BAA-621 / DSM 15236 / T118) (Rhodoferax ferrireducens).